The chain runs to 239 residues: Ribonuclease PH (239 aa).

Residues arginine 88 and 126–128 (GTR) each bind phosphate.

The protein belongs to the RNase PH family. As to quaternary structure, homohexameric ring arranged as a trimer of dimers.

It carries out the reaction tRNA(n+1) + phosphate = tRNA(n) + a ribonucleoside 5'-diphosphate. Its function is as follows. Phosphorolytic 3'-5' exoribonuclease that plays an important role in tRNA 3'-end maturation. Removes nucleotide residues following the 3'-CCA terminus of tRNAs; can also add nucleotides to the ends of RNA molecules by using nucleoside diphosphates as substrates, but this may not be physiologically important. Probably plays a role in initiation of 16S rRNA degradation (leading to ribosome degradation) during starvation. This is Ribonuclease PH from Coxiella burnetii (strain Dugway 5J108-111).